A 585-amino-acid polypeptide reads, in one-letter code: MGRIIRVTGPLVVADGMKGSKMYEVVRVGEMGLIGEIIRLEGDKAVIQVYEETAGIRPGEPVEGTGSSLSVELGPGLLTSMYDGIQRPLEKLRELSGDFIARGLTAPALPRDKKWHFTPTVKVGDKVTGGDILGVVPETSIIEHKILVPPWVEGEIVEIAEEGDYTVEEVIAKVKKPDGSIEELKMYHKWPVRVKRPYKNKLPPEVPLITGQRTIDTFFSIAKGGTAAIPGPFGSGKTVTQHQLAKWSDAQVVVYIGCGERGNEMTDVLEEFPKLKDPKTGKPLMERTVLIANTSNMPVAAREASIYTGITIAEYFRDQGYDVALMADSTSRWAEALREISGRLEEMPGEEGYPAYLASKIAEFYERAGRVVTLGSEPRVGSVSVIGAVSPPGGDFSEPVVQNTLRVVKVFWALDADLARRRHFPAINWLRSYSLYLDSIQDWWHKNVDPEWRKMRDTAMALLQKEAELQEIVRIVGPDALPDREKAILIVTRMLREDYLQQDAFDEVDTYCPPKKQVTMMRVILNFYERTMEAVDRGVPVDEIAKLPVREKIGRMKFEPDIEKIRALIDETNEQFEELFKKYGA.

231 to 238 provides a ligand contact to ATP; that stretch reads GPFGSGKT.

It belongs to the ATPase alpha/beta chains family. In terms of assembly, has multiple subunits with at least A(3), B(3), C, D, E, F, H, I and proteolipid K(x).

It is found in the cell membrane. It carries out the reaction ATP + H2O + 4 H(+)(in) = ADP + phosphate + 5 H(+)(out). Component of the A-type ATP synthase that produces ATP from ADP in the presence of a proton gradient across the membrane. The A chain is the catalytic subunit. The protein is A-type ATP synthase subunit A of Desulfurococcus sp. (strain SY).